Consider the following 153-residue polypeptide: Mitochondrial import inner membrane translocase subunit TIM14 (153 aa).

At 1-43 (MDGTGISDGSSVTGDAAAGFPAGATQAPGSKQGMDLYFDNALQ) the chain is on the mitochondrial intermembrane side. Residues 44–66 (YMGEHPVLAGVGGFLALYVGAGV) form a helical membrane-spanning segment. Residues 67–153 (YKGVQTRLNG…FLEKKGIVRK (87 aa)) lie on the Mitochondrial matrix side of the membrane. The region spanning 96–153 (EALQILNLKENNLTTKKLKEVHRKIMLANHPDKGGSPYLATKINEAKDFLEKKGIVRK) is the J domain.

Belongs to the TIM14 family. In terms of assembly, heterodimer with PAM16. Component of the PAM complex, at least composed of mtHsp70, MGE1, TIM44, PAM16, PAM17 and PAM18.

Its subcellular location is the mitochondrion inner membrane. Functionally, essential component of the PAM complex, a complex required for the translocation of transit peptide-containing proteins from the inner membrane into the mitochondrial matrix in an ATP-dependent manner. In the complex, it is required to stimulate activity of mtHSP70 (SSC1). The sequence is that of Mitochondrial import inner membrane translocase subunit TIM14 (PAM18) from Candida glabrata (strain ATCC 2001 / BCRC 20586 / JCM 3761 / NBRC 0622 / NRRL Y-65 / CBS 138) (Yeast).